The following is a 287-amino-acid chain: MPLIFKIGYNVIPLQDVILPTPSSKVLKYLIQSGKLLPSLNNLITSRDKYKPIFISHLGLNQRRIFQTNGNLKTISRGSKLSSTIAFSTQVNVLPELDEGVFETIYGKFHITIESVEIVEVEKLKEEVEKHMNDNIRVRFISPTLLSSKVLLPPSLSERYKRVNAGYSTLPSVGLIVAYAYNVYCNLIGKKEVEVRAFKFGVISNALSRIIGYDLHPVTIVIGEDSKGNLRKARGVMGWIEFDIPDEKLKRRALRYLLASSYLGIGRSRGIGFGEIKLEFIKREENH.

This sequence belongs to the CRISPR-associated endoribonuclease Cas6 family. As to quaternary structure, part of the aCascade ribonucleoprotein complex, minimally composed of Csa2 and Cas5a, which binds crRNA. Other possible components of aCascade in strain P1 are Cas6b (SSO1437) and Csa5 (SSO1443), while SSO1399, Cas5b (SSO1400) and SSO1401 have sometimes been seen weakly associated. Csa2 is probably the major RNA-binding subunit. The Csa2-Cas5a-crRNA complex also binds target DNA homologous to crRNA, probably forming an R-loop. Purified aCascade forms a filament about 6 nm in width.

Functionally, CRISPR (clustered regularly interspaced short palindromic repeat) is an adaptive immune system that provides protection against mobile genetic elements (viruses, transposable elements and conjugative plasmids). CRISPR clusters contain spacers, sequences complementary to antecedent mobile elements, and target invading nucleic acids. CRISPR clusters are transcribed and processed into CRISPR RNA (crRNA). The chain is CRISPR-associated endoribonuclease Cas6 1 (cas6a) from Saccharolobus solfataricus (strain ATCC 35092 / DSM 1617 / JCM 11322 / P2) (Sulfolobus solfataricus).